The following is a 130-amino-acid chain: Small ribosomal subunit protein uS9 (130 aa).

The segment at 105–130 is disordered; the sequence is TRDPRMKERKKYGLKKARRAPQFSKR. Residues 111–130 show a composition bias toward basic residues; the sequence is KERKKYGLKKARRAPQFSKR.

Belongs to the universal ribosomal protein uS9 family.

The protein is Small ribosomal subunit protein uS9 of Acetivibrio thermocellus (strain ATCC 27405 / DSM 1237 / JCM 9322 / NBRC 103400 / NCIMB 10682 / NRRL B-4536 / VPI 7372) (Clostridium thermocellum).